A 235-amino-acid polypeptide reads, in one-letter code: TVP38/TMEM64 family inner membrane protein YdjZ (235 aa).

Residues 1 to 13 lie on the Periplasmic side of the membrane; it reads MMMMQSRKIWYYR. A helical membrane pass occupies residues 14–34; it reads ITLIILLFAMLLAWALLPGVH. Residues 35-64 lie on the Cytoplasmic side of the membrane; that stretch reads EFINRSVAAFAAVDQQGIERFIQSYGALAA. The helical transmembrane segment at 65-85 threads the bilayer; sequence VVSFLLMILQAIAAPLPAFLI. At 86–95 the chain is on the periplasmic side; the sequence is TFANASLFGA. A VTT domain region spans residues 90-199; sequence ASLFGAFWGG…IVYSWAGSML (110 aa). A helical membrane pass occupies residues 96–116; sequence FWGGLLSWTSSMAGAALCFFI. The Cytoplasmic portion of the chain corresponds to 117–176; sequence ARVMGREVVEKLTGKTVLDSMDGFFTRYGKHTILVCRLLPFVPFDPISYAAGLTSIRFRS. Residues 177–197 traverse the membrane as a helical segment; that stretch reads FFIATGLGQLPATIVYSWAGS. Residues 198–202 are Periplasmic-facing; it reads MLTGG. The chain crosses the membrane as a helical span at residues 203 to 223; it reads TFWFVTGLFILFALTVVIFMA. The Cytoplasmic portion of the chain corresponds to 224 to 235; it reads KKIWLERQKRNA.

This sequence belongs to the TVP38/TMEM64 family.

It localises to the cell inner membrane. The chain is TVP38/TMEM64 family inner membrane protein YdjZ (ydjZ) from Escherichia coli (strain K12).